A 370-amino-acid chain; its full sequence is Cysteine synthase 1 (370 aa).

The transit peptide at 1-16 (MFRQSVRRFATAALRS) directs the protein to the mitochondrion. Lysine 73 is modified (N6-(pyridoxal phosphate)lysine). Pyridoxal 5'-phosphate-binding positions include asparagine 103, 209–213 (GTGGT), and serine 308.

The protein belongs to the cysteine synthase/cystathionine beta-synthase family. Requires pyridoxal 5'-phosphate as cofactor.

Its subcellular location is the mitochondrion. It catalyses the reaction O-succinyl-L-serine + hydrogen sulfide = L-cysteine + succinate. The catalysed reaction is O-acetyl-L-serine + hydrogen sulfide = L-cysteine + acetate. The protein operates within amino-acid biosynthesis; L-cysteine biosynthesis; L-cysteine from L-serine: step 2/2. Its function is as follows. Catalyzes the conversion of O-succinyl-L-serine into cysteine, the last step in the cysteine biosynthesis pathway. Can also use O-acetyl-L-serine. The sequence is that of Cysteine synthase 1 from Emericella nidulans (strain FGSC A4 / ATCC 38163 / CBS 112.46 / NRRL 194 / M139) (Aspergillus nidulans).